A 327-amino-acid polypeptide reads, in one-letter code: MQHLEEIIANASAAIEAAESLVVLDEVRVQYLGKKGELTAQLQSLGKLPPEERREAGQEINKAKGAVQQAIAARKDALQRAELEAKLAAETIDVTLPGRRIENGGLHPVTRTVERIEQFFGELGFNTESGPEIEDAFHNFDALNIAEDHPARTDHDTFFFNPDLMLRTHTSGVQIRTMENGKPPFRFIAPGRVYRNDYDQTHTPMFHQVEGMLVDENVNFAQLKGILHDFLCNFFEEEVEVRFRPSYFPFTEPSAEVDVKGKNGKWLEVLGCGMVHPNVLRSVGIDPEKYSGFAFGMGVERLTMLRYGVNDLRAFFENDLRFLKQFK.

E252 contributes to the Mg(2+) binding site.

It belongs to the class-II aminoacyl-tRNA synthetase family. Phe-tRNA synthetase alpha subunit type 1 subfamily. As to quaternary structure, tetramer of two alpha and two beta subunits. Mg(2+) serves as cofactor.

The protein localises to the cytoplasm. The catalysed reaction is tRNA(Phe) + L-phenylalanine + ATP = L-phenylalanyl-tRNA(Phe) + AMP + diphosphate + H(+). This is Phenylalanine--tRNA ligase alpha subunit from Vibrio campbellii (strain ATCC BAA-1116).